The following is a 143-amino-acid chain: P840 reaction center 17 kDa protein (143 aa).

Polar residues predominate over residues 1 to 23 (MQPQLSRPQTATNQVRNSVSGPW). The interval 1 to 25 (MQPQLSRPQTATNQVRNSVSGPWSG) is disordered.

Component of the P840 reaction center.

The chain is P840 reaction center 17 kDa protein (pscD) from Chlorobaculum thiosulfatiphilum (Chlorobium limicola f.sp. thiosulfatophilum).